Here is a 204-residue protein sequence, read N- to C-terminus: uncharacterized protein (204 aa).

Positions 1–21 (MIKKFLLFAMLNIFLTNKAHS) are cleaved as a signal peptide.

This is an uncharacterized protein from Borreliella burgdorferi (strain ATCC 35210 / DSM 4680 / CIP 102532 / B31) (Borrelia burgdorferi).